The chain runs to 1088 residues: ATP-dependent helicase/deoxyribonuclease subunit B (1088 aa).

It belongs to the helicase family. AddB/RexB type 2 subfamily. In terms of assembly, heterodimer of AddA and RexB. It depends on Mg(2+) as a cofactor.

In terms of biological role, the heterodimer acts as both an ATP-dependent DNA helicase and an ATP-dependent, dual-direction single-stranded exonuclease. Recognizes the chi site generating a DNA molecule suitable for the initiation of homologous recombination. This subunit has 5' -&gt; 3' nuclease activity but not helicase activity. In Streptococcus suis (strain 98HAH33), this protein is ATP-dependent helicase/deoxyribonuclease subunit B.